Here is a 238-residue protein sequence, read N- to C-terminus: Uridylate kinase (238 aa).

12–15 (KLSG) lines the ATP pocket. Residue glycine 54 coordinates UMP. Glycine 55 and arginine 59 together coordinate ATP. UMP contacts are provided by residues aspartate 74 and 135 to 142 (TGNPFFTT). Residues threonine 162, tyrosine 168, and aspartate 171 each contribute to the ATP site.

This sequence belongs to the UMP kinase family. As to quaternary structure, homohexamer.

It is found in the cytoplasm. It catalyses the reaction UMP + ATP = UDP + ADP. It participates in pyrimidine metabolism; CTP biosynthesis via de novo pathway; UDP from UMP (UMPK route): step 1/1. Its activity is regulated as follows. Inhibited by UTP. Its function is as follows. Catalyzes the reversible phosphorylation of UMP to UDP. The protein is Uridylate kinase of Azoarcus sp. (strain BH72).